We begin with the raw amino-acid sequence, 490 residues long: Trigger factor (490 aa).

The region spanning 162-243 is the PPIase FKBP-type domain; that stretch reads GDFVSIDLSA…VGSIKERELP (82 aa). A disordered region spans residues 433 to 490; sequence VDAVLGPRRGGADEAGAEAEAAEEKPAKAKKSADSEKTDKSEKAEKKSKKKSKDDDAE. A compositionally biased stretch (basic and acidic residues) spans 454–477; it reads AEEKPAKAKKSADSEKTDKSEKAE.

It belongs to the FKBP-type PPIase family. Tig subfamily.

It localises to the cytoplasm. The enzyme catalyses [protein]-peptidylproline (omega=180) = [protein]-peptidylproline (omega=0). In terms of biological role, involved in protein export. Acts as a chaperone by maintaining the newly synthesized protein in an open conformation. Functions as a peptidyl-prolyl cis-trans isomerase. The chain is Trigger factor from Mycobacteroides abscessus (strain ATCC 19977 / DSM 44196 / CCUG 20993 / CIP 104536 / JCM 13569 / NCTC 13031 / TMC 1543 / L948) (Mycobacterium abscessus).